A 445-amino-acid chain; its full sequence is 3-phosphoshikimate 1-carboxyvinyltransferase (445 aa).

3-phosphoshikimate contacts are provided by Lys21, Ser22, and Arg26. Lys21 contributes to the phosphoenolpyruvate binding site. Residues Gly92 and Arg120 each coordinate phosphoenolpyruvate. Ser165, Gln166, Asp307, and Lys334 together coordinate 3-phosphoshikimate. Gln166 serves as a coordination point for phosphoenolpyruvate. Asp307 acts as the Proton acceptor in catalysis. 3 residues coordinate phosphoenolpyruvate: Arg338, Arg379, and Lys405.

Belongs to the EPSP synthase family. Monomer.

The protein resides in the cytoplasm. It catalyses the reaction 3-phosphoshikimate + phosphoenolpyruvate = 5-O-(1-carboxyvinyl)-3-phosphoshikimate + phosphate. It participates in metabolic intermediate biosynthesis; chorismate biosynthesis; chorismate from D-erythrose 4-phosphate and phosphoenolpyruvate: step 6/7. Its function is as follows. Catalyzes the transfer of the enolpyruvyl moiety of phosphoenolpyruvate (PEP) to the 5-hydroxyl of shikimate-3-phosphate (S3P) to produce enolpyruvyl shikimate-3-phosphate and inorganic phosphate. This Chlamydia pneumoniae (Chlamydophila pneumoniae) protein is 3-phosphoshikimate 1-carboxyvinyltransferase.